A 704-amino-acid chain; its full sequence is mRNA (2'-O-methyladenosine-N(6)-)-methyltransferase (704 aa).

A disordered region spans residues 1–33 (MANENHGSPREEASLLSHSPGTSNQSQPCSPKP). The segment covering 16–29 (LSHSPGTSNQSQPC) has biased composition (polar residues). Ser30 bears the Phosphoserine mark. Residues 43-77 (ELVHAGWEKCWSRRENRPYYFNRFTNQSLWEMPVL) form the WW domain. The interval 88–151 (GLNATPLPQD…PSSPSIPGTP (64 aa)) is disordered. Residues 109–113 (KPRKR) carry the Nuclear localization signal motif. A Phosphoserine modification is found at Ser116. Residues 136–149 (PTGQSVPSSPSIPG) are compositionally biased toward polar residues. Thr152 bears the Phosphothreonine mark. Substrate-binding residues include Arg235 and Arg265. 553–556 (NPPF) serves as a coordination point for S-adenosyl-L-methionine. Substrate contacts are provided by residues Glu558 and 588 to 592 (WREPP). Position 614 to 616 (614 to 616 (FEH)) interacts with S-adenosyl-L-methionine. A disordered region spans residues 663 to 704 (LSAAYRQSGRSHSSGSSSSSSSEAKDRDSGREQGPSREPHPT). The Nuclear localization signal signature appears at 669-684 (QSGRSHSSGSSSSSSS). A compositionally biased stretch (low complexity) spans 670–684 (SGRSHSSGSSSSSSS). Basic and acidic residues predominate over residues 685–704 (EAKDRDSGREQGPSREPHPT).

It belongs to the CAPAM family. As to quaternary structure, interacts with POLR2A; interacts with the phosphorylated C-terminal domain (CTD) of POLR2A. As to expression, ubiquitous.

The protein localises to the nucleus. It carries out the reaction a 5'-end (N(7)-methyl 5'-triphosphoguanosine)-(2'-O-methyladenosine) in mRNA + S-adenosyl-L-methionine = a 5'-end (N(7)-methyl 5'-triphosphoguanosine)-(N(6),2'-O-dimethyladenosine) in mRNA + S-adenosyl-L-homocysteine + H(+). Its activity is regulated as follows. Cap-specific adenosine methyltransferase activity is inhibited by zinc. In terms of biological role, cap-specific adenosine methyltransferase that catalyzes formation of N(6),2'-O-dimethyladenosine cap (m6A(m)) by methylating the adenosine at the second transcribed position of capped mRNAs. Recruited to the early elongation complex of RNA polymerase II (RNAPII) via interaction with POLR2A and mediates formation of m6A(m) co-transcriptionally. The sequence is that of mRNA (2'-O-methyladenosine-N(6)-)-methyltransferase from Homo sapiens (Human).